The sequence spans 192 residues: Putative manganese efflux pump MntP (192 aa).

The next 6 membrane-spanning stretches (helical) occupy residues 2-22 (IAII…AFAV), 41-61 (SALW…YAAS), 62-82 (AFSA…LAFI), 109-129 (MLPL…SLAF), 136-156 (FAIL…LYIG), and 172-192 (GVVL…VIAF).

Belongs to the MntP (TC 9.B.29) family.

It localises to the cell membrane. In terms of biological role, probably functions as a manganese efflux pump. This chain is Putative manganese efflux pump MntP, found in Bifidobacterium longum subsp. infantis (strain ATCC 15697 / DSM 20088 / JCM 1222 / NCTC 11817 / S12).